Here is a 427-residue protein sequence, read N- to C-terminus: Histidine--tRNA ligase (427 aa).

This sequence belongs to the class-II aminoacyl-tRNA synthetase family. Homodimer.

The protein localises to the cytoplasm. The enzyme catalyses tRNA(His) + L-histidine + ATP = L-histidyl-tRNA(His) + AMP + diphosphate + H(+). The sequence is that of Histidine--tRNA ligase from Proteus mirabilis (strain HI4320).